The primary structure comprises 302 residues: Methionyl-tRNA formyltransferase (302 aa).

Residue 108 to 111 coordinates (6S)-5,6,7,8-tetrahydrofolate; the sequence is SILP.

The protein belongs to the Fmt family.

The catalysed reaction is L-methionyl-tRNA(fMet) + (6R)-10-formyltetrahydrofolate = N-formyl-L-methionyl-tRNA(fMet) + (6S)-5,6,7,8-tetrahydrofolate + H(+). Functionally, attaches a formyl group to the free amino group of methionyl-tRNA(fMet). The formyl group appears to play a dual role in the initiator identity of N-formylmethionyl-tRNA by promoting its recognition by IF2 and preventing the misappropriation of this tRNA by the elongation apparatus. The sequence is that of Methionyl-tRNA formyltransferase from Sulfurimonas denitrificans (strain ATCC 33889 / DSM 1251) (Thiomicrospira denitrificans (strain ATCC 33889 / DSM 1251)).